Consider the following 316-residue polypeptide: Protoheme IX farnesyltransferase (316 aa).

Transmembrane regions (helical) follow at residues Val35 to Gln55, Pro56 to Leu76, Val119 to Phe139, Ile156 to Gly176, Leu183 to Ile203, Ile229 to Leu246, Gly250 to Leu272, and Ala283 to Leu303.

It belongs to the UbiA prenyltransferase family. Protoheme IX farnesyltransferase subfamily.

Its subcellular location is the cell inner membrane. It carries out the reaction heme b + (2E,6E)-farnesyl diphosphate + H2O = Fe(II)-heme o + diphosphate. It functions in the pathway porphyrin-containing compound metabolism; heme O biosynthesis; heme O from protoheme: step 1/1. Functionally, converts heme B (protoheme IX) to heme O by substitution of the vinyl group on carbon 2 of heme B porphyrin ring with a hydroxyethyl farnesyl side group. The sequence is that of Protoheme IX farnesyltransferase from Methylobacterium radiotolerans (strain ATCC 27329 / DSM 1819 / JCM 2831 / NBRC 15690 / NCIMB 10815 / 0-1).